The following is a 107-amino-acid chain: Iron-sulfur cluster assembly protein CyaY (107 aa).

The protein belongs to the frataxin family.

Involved in iron-sulfur (Fe-S) cluster assembly. May act as a regulator of Fe-S biogenesis. In Yersinia pseudotuberculosis serotype O:1b (strain IP 31758), this protein is Iron-sulfur cluster assembly protein CyaY.